The primary structure comprises 240 residues: Ubiquinone biosynthesis O-methyltransferase (240 aa).

R44, G64, D85, and M129 together coordinate S-adenosyl-L-methionine.

This sequence belongs to the methyltransferase superfamily. UbiG/COQ3 family.

The enzyme catalyses a 3-demethylubiquinol + S-adenosyl-L-methionine = a ubiquinol + S-adenosyl-L-homocysteine + H(+). The catalysed reaction is a 3-(all-trans-polyprenyl)benzene-1,2-diol + S-adenosyl-L-methionine = a 2-methoxy-6-(all-trans-polyprenyl)phenol + S-adenosyl-L-homocysteine + H(+). It functions in the pathway cofactor biosynthesis; ubiquinone biosynthesis. O-methyltransferase that catalyzes the 2 O-methylation steps in the ubiquinone biosynthetic pathway. This chain is Ubiquinone biosynthesis O-methyltransferase, found in Escherichia coli O9:H4 (strain HS).